The following is a 787-amino-acid chain: tRNA ligase 1 (787 aa).

Residue lysine 117 is the N6-AMP-lysine intermediate of the active site.

This sequence belongs to the TRL1 family.

The protein localises to the cytoplasm. The enzyme catalyses ATP + (ribonucleotide)n-3'-hydroxyl + 5'-phospho-(ribonucleotide)m = (ribonucleotide)n+m + AMP + diphosphate.. Functionally, required for the splicing of precursor tRNA molecules containing introns. The ligation activity requires three enzymatic activities: phosphorylation of the 5' terminus of the 3' half-tRNA in the presence of ATP, opening of the 2'3'-cyclic phosphodiester bond of the 5' half-tRNA leaving a 2'-phosphomonoester and ligation of the two tRNA halves in an ATP-dependent reaction. The chain is tRNA ligase 1 (trl1) from Schizosaccharomyces pombe (strain 972 / ATCC 24843) (Fission yeast).